We begin with the raw amino-acid sequence, 188 residues long: NAD(P)H-quinone oxidoreductase subunit J (188 aa).

The segment covering 1–12 (MSETPSKQTAAS) has biased composition (polar residues). The disordered stretch occupies residues 1–23 (MSETPSKQTAASDETGAVVAPEP).

It belongs to the complex I 30 kDa subunit family. In terms of assembly, NDH-1 can be composed of about 15 different subunits; different subcomplexes with different compositions have been identified which probably have different functions.

The protein resides in the cellular thylakoid membrane. The catalysed reaction is a plastoquinone + NADH + (n+1) H(+)(in) = a plastoquinol + NAD(+) + n H(+)(out). It catalyses the reaction a plastoquinone + NADPH + (n+1) H(+)(in) = a plastoquinol + NADP(+) + n H(+)(out). Functionally, NDH-1 shuttles electrons from an unknown electron donor, via FMN and iron-sulfur (Fe-S) centers, to quinones in the respiratory and/or the photosynthetic chain. The immediate electron acceptor for the enzyme in this species is believed to be plastoquinone. Couples the redox reaction to proton translocation, and thus conserves the redox energy in a proton gradient. Cyanobacterial NDH-1 also plays a role in inorganic carbon-concentration. The protein is NAD(P)H-quinone oxidoreductase subunit J of Synechococcus sp. (strain CC9605).